We begin with the raw amino-acid sequence, 365 residues long: P43 5S RNA-binding protein (365 aa).

C2H2-type zinc fingers lie at residues 15–39, 45–69, 75–100, 106–130, 136–160, 163–187, 191–213, 220–245, and 251–275; these read LRCP…MAGH, WKCG…VKRH, LSCP…LYKH, LKCF…LSVH, SVCD…QKRH, YRCS…VKKH, LQCA…KATH, LPCP…RKLH, and HRCP…LVVH.

As to quaternary structure, the 42S RNP particle comprises four subunits each of which contains one molecule of 5S RNA, three molecules of tRNA, two molecules of p50 (EF1-alpha) and one molecule of the 5S RNA binding protein 43.

In terms of biological role, p43 is a 5S RNA binding protein which is a major constituent of oocytes and comprises part of a 42S ribonucleoprotein storage particle. The polypeptide is P43 5S RNA-binding protein (Xenopus laevis (African clawed frog)).